The following is a 503-amino-acid chain: MLPDSEGQKLKTFLLGTGTTLDPSLDPTGNSNFSMATTSDSSTIWTALPASQPGDKDIPTVDLAAISEAYGSTSSTTSLTSSVTSQYQYNSYPQYAMYTSANPANYYQQVTANLRAGTTAFPYSLTTPSYYGSYPVDYTSAAAAYQNPYYTNLRGGTAAPYYNPLNATTAAAYASVASSVLGTDAVNLGTSSDGSTGVPSTVTSFSLKEKKPKVSKKKKTGSCSPGDETYARVFIWDIDDIAVISRNYLASVTHTNEFYARAANSVSHLMERIALNNFADVNEFLEGDITNIEDAVVDETTMDSGPIDNLRGLDVMRRVAPKYSAFRQFYTENSTKNDVAGFKQEQNGFNFELLERVGFGAREATELYQSAIQLQTLPNFGQRWPCAQRCMDLVVEKSKLSAEKYANVVLSNDGLVLGAAQLMISGLNSSVPVENIYSISKQGKESVFEKIQSRFGKKCSFICITSGDTANSAKRLNIPVWPLNSNTDLDKLYSALDNFLLGG.

Aspartate 237 functions as the Nucleophile in the catalytic mechanism. Aspartate 237 and aspartate 239 together coordinate Mg(2+). The active-site Proton donor is aspartate 239.

It belongs to the HAD-like hydrolase superfamily. EYA family. Interacts (via C-terminus) with ceh-34 (via N-terminus). The cofactor is Mg(2+). In terms of tissue distribution, expressed in body wall muscles. Expressed in BAG sensory neurons and in other head neurons.

It localises to the nucleus. It catalyses the reaction O-phospho-L-tyrosyl-[protein] + H2O = L-tyrosyl-[protein] + phosphate. In terms of biological role, tyrosine protein phosphatase. Acts probably as a transcription regulator in the embryonic and postembryonic development of several tissues including pharynx, vulva and gonads. Required for the development of anterior tissues during late embryogenesis. Together with ceh-34, required to specify the coelomocyte fate in embryonic and postembryonic precursors. In the anterior part of the embryo, prevents apoptosis in cells that are not fated to die. Together with ceh-34 activates proapoptotic factor egl-1 expression to promote motor neuron M4 sister cell apoptosis. Also promotes apoptosis of I1 pharyngeal neuron sister cell. Plays a role in locomotion and fertility. May play a role in resistance to heat and oxidative stresses. May cooperate with the transcription factors vab-3 and ceh-32 to repress transcription factor ets-5 expression in non BAG neuronal cells. The protein is Protein phosphatase eya-1 of Caenorhabditis elegans.